A 1091-amino-acid chain; its full sequence is Voltage-dependent calcium channel subunit alpha-2/delta-1 (1091 aa).

A signal peptide spans 1–24; the sequence is MAAGCLLALTLTLFQSWLIGPSSE. Topologically, residues 25–1061 are extracellular; it reads EPFPSPVTIK…VLEDYTDCGG (1037 aa). An N-linked (GlcNAc...) asparagine glycan is attached at Asn92. At Ser119 the chain carries Phosphoserine. N-linked (GlcNAc...) asparagine glycans are attached at residues Asn136 and Asn184. The VWFA domain occupies 252-429; sequence DMLILVDVSG…INTQEYLDVL (178 aa). The a divalent metal cation site is built by Asp258, Ser260, and Ser262. Residues 258–262 carry the MIDAS-like motif motif; sequence DVSGS. Asn323 and Asn347 each carry an N-linked (GlcNAc...) asparagine glycan. A disulfide bond links Cys403 and Cys1047. The region spanning 445 to 536 is the Cache domain; it reads WTNVYLDALE…QPKNPKSQEP (92 aa). N-linked (GlcNAc...) asparagine glycans are attached at residues Asn593, Asn769, Asn876, and Asn973. Residues 1062 to 1082 form a helical membrane-spanning segment; that stretch reads VSGLNPSLWSIFGLQFILLWL. The Cytoplasmic portion of the chain corresponds to 1083 to 1091; it reads VSGSRHYLW.

The protein belongs to the calcium channel subunit alpha-2/delta family. Dimer formed of alpha-2-1 and delta-1 chains; disulfide-linked. Voltage-dependent calcium channels are multisubunit complexes, consisting of alpha-1 (CACNA1), alpha-2 (CACNA2D), beta (CACNB) and delta (CACNA2D) subunits in a 1:1:1:1 ratio. Post-translationally, proteolytically processed into subunits alpha-2-1 and delta-1 that are disulfide-linked.

It is found in the membrane. The protein resides in the cell membrane. Functionally, the alpha-2/delta subunit of voltage-dependent calcium channels regulates calcium current density and activation/inactivation kinetics of the calcium channel. Plays an important role in excitation-contraction coupling. This is Voltage-dependent calcium channel subunit alpha-2/delta-1 (Cacna2d1) from Rattus norvegicus (Rat).